A 262-amino-acid polypeptide reads, in one-letter code: Transmembrane protein 270 (262 aa).

5 helical membrane passes run 6–26 (LVRS…ALLI), 30–50 (AHLY…LLGL), 67–87 (PVGR…CLAL), 92–112 (LVWA…KWLG), and 127–147 (LFLS…LLVW). Residues 226-262 (QEAEPQKALGLSSETPPPGPPAPGARPVLPEPGTPGE) form a disordered region. A compositionally biased stretch (pro residues) spans 240–262 (TPPPGPPAPGARPVLPEPGTPGE).

Its subcellular location is the membrane. In Bos taurus (Bovine), this protein is Transmembrane protein 270.